The primary structure comprises 327 residues: E3 ubiquitin ligase Rnf121 (327 aa).

5 helical membrane passes run 50 to 70 (MHAEMVLILIATLVVAQLLLV), 79 to 96 (SYNMVTLFQMWIVPVYFT), 99 to 119 (LHWWRFLGIWIVFSIITAYIT), 148 to 168 (ATGIVGYIAVMFTLFGLNLLF), and 173 to 193 (EDAMDFGISLLFYGLYYGVLG). The RING-type; atypical zinc finger occupies 226–276 (CAVCGQQIFVDVNEEGIIENTYRLSCNHVFHEFCIRGWCIVGKKQTCPYCK).

It belongs to the RNF121 family.

It is found in the endoplasmic reticulum membrane. The enzyme catalyses S-ubiquitinyl-[E2 ubiquitin-conjugating enzyme]-L-cysteine + [acceptor protein]-L-lysine = [E2 ubiquitin-conjugating enzyme]-L-cysteine + N(6)-ubiquitinyl-[acceptor protein]-L-lysine.. Its pathway is protein modification; protein ubiquitination. Its function is as follows. E3 ubiquitin ligase which accepts ubiquitin and transfers it to substrates thereby promoting their degradation by the endoplasmic reticulum-associated degradation (ERAD) pathway which is a pathway involved in ubiquitin-dependent degradation of misfolded endoplasmic reticulum proteins. May regulate the unfolded protein response to reduce endoplasmic reticulum stress. The chain is E3 ubiquitin ligase Rnf121 (rnf121) from Xenopus laevis (African clawed frog).